A 252-amino-acid chain; its full sequence is Chitooligosaccharide deacetylase (252 aa).

2 residues coordinate Mg(2+): histidine 61 and histidine 125.

This sequence belongs to the YdjC deacetylase family. ChbG subfamily. Homodimer. The cofactor is Mg(2+).

The protein localises to the cytoplasm. It catalyses the reaction N,N'-diacetylchitobiose + H2O = N-acetyl-beta-D-glucosaminyl-(1-&gt;4)-D-glucosamine + acetate. The catalysed reaction is diacetylchitobiose-6'-phosphate + H2O = N'-monoacetylchitobiose-6'-phosphate + acetate. Its pathway is glycan degradation; chitin degradation. In terms of biological role, involved in the degradation of chitin. ChbG is essential for growth on the acetylated chitooligosaccharides chitobiose and chitotriose but is dispensable for growth on cellobiose and chitosan dimer, the deacetylated form of chitobiose. Deacetylation of chitobiose-6-P and chitotriose-6-P is necessary for both the activation of the chb promoter by the regulatory protein ChbR and the hydrolysis of phosphorylated beta-glucosides by the phospho-beta-glucosidase ChbF. Catalyzes the removal of only one acetyl group from chitobiose-6-P to yield monoacetylchitobiose-6-P, the inducer of ChbR and the substrate of ChbF. This is Chitooligosaccharide deacetylase from Salmonella typhimurium (strain LT2 / SGSC1412 / ATCC 700720).